Reading from the N-terminus, the 74-residue chain is MIGQKAWVNIGKTEFILLLVVGILTIINVLTADGEKRTFHSPKKKNINHLTLYDCVSPEVQNSINETGRVTNFF.

The polypeptide is Putative ribosome-binding protein YbzG (ybzG) (Bacillus subtilis (strain 168)).